Here is a 154-residue protein sequence, read N- to C-terminus: 6,7-dimethyl-8-ribityllumazine synthase (154 aa).

Residues phenylalanine 22, 56–58 (AFE), and 80–82 (AVI) contribute to the 5-amino-6-(D-ribitylamino)uracil site. 85–86 (AT) is a binding site for (2S)-2-hydroxy-3-oxobutyl phosphate. Histidine 88 serves as the catalytic Proton donor. Phenylalanine 113 provides a ligand contact to 5-amino-6-(D-ribitylamino)uracil. Arginine 127 serves as a coordination point for (2S)-2-hydroxy-3-oxobutyl phosphate.

This sequence belongs to the DMRL synthase family.

It carries out the reaction (2S)-2-hydroxy-3-oxobutyl phosphate + 5-amino-6-(D-ribitylamino)uracil = 6,7-dimethyl-8-(1-D-ribityl)lumazine + phosphate + 2 H2O + H(+). It participates in cofactor biosynthesis; riboflavin biosynthesis; riboflavin from 2-hydroxy-3-oxobutyl phosphate and 5-amino-6-(D-ribitylamino)uracil: step 1/2. Its function is as follows. Catalyzes the formation of 6,7-dimethyl-8-ribityllumazine by condensation of 5-amino-6-(D-ribitylamino)uracil with 3,4-dihydroxy-2-butanone 4-phosphate. This is the penultimate step in the biosynthesis of riboflavin. The polypeptide is 6,7-dimethyl-8-ribityllumazine synthase (Clostridium botulinum (strain ATCC 19397 / Type A)).